The primary structure comprises 199 residues: MEQFDFDSIFNNAVGNMKYFIKKVKKYEEIKKHEDILKKDLLNAVNVFIERFRNNPCICKNRNNHSSCTTNACGEIENRMKNWVEKLFEYSDDEEKLNEFFKIIAKDAMKFVELDFEPLYILCGLEEIRETAEEKLKEELPTEEYLKVMEEFDDLIERMSLVATAVYMEFEDRVFERMGINKNLKYNIIKLGLKKMNIN.

This sequence to M.jannaschii MJ1356.

This is an uncharacterized protein from Methanocaldococcus jannaschii (strain ATCC 43067 / DSM 2661 / JAL-1 / JCM 10045 / NBRC 100440) (Methanococcus jannaschii).